Consider the following 1008-residue polypeptide: Collagen alpha-1(I) chain (1008 aa).

The tract at residues 1-1008 (GGISVPGPMG…PGPPGPPGPP (1008 aa)) is disordered. 4-hydroxyproline is present on residues Pro-18, Pro-21, Pro-23, Pro-32, Pro-35, Pro-38, Pro-52, Pro-67, Pro-73, Pro-82, and Pro-88. Positions 55-69 (NGDDGEAGKPGRPGE) are enriched in basic and acidic residues. Position 91 is a 5-hydroxylysine; alternate (Lys-91). A glycan (O-linked (Gal...) hydroxylysine; alternate) is linked at Lys-91. Ser-97 is subject to Phosphoserine. A compositionally biased stretch (low complexity) spans 105–121 (DAGPAGPKGEPGSPGEN). A 4-hydroxyproline mark is found at Pro-115, Pro-118, Pro-124, Pro-133, Pro-139, Pro-160, Pro-169, Pro-172, Pro-199, Pro-202, Pro-214, Pro-220, Pro-229, Pro-235, and Pro-238. Positions 139–157 (PGASGPAGARGNDGAAGAA) are enriched in low complexity. The span at 159 to 171 (PPGPTGPAGPPGF) shows a compositional bias: pro residues. Residues 205–235 (AGAAGPAGNPGADGQPGAKGANGAPGIAGAP) show a composition bias toward low complexity. Over residues 236 to 255 (GFPGRGPSGPQGPSGPGPKG) the composition is skewed to gly residues. At Lys-254 the chain carries 5-hydroxylysine. 4-hydroxyproline occurs at positions 260, 263, 275, 284, 299, 305, 314, and 320. Over residues 309–318 (GERGGPGSRG) the composition is skewed to gly residues. Lys-329 bears the 5-hydroxylysine mark. A 4-hydroxyproline mark is found at Pro-338, Pro-347, Pro-353, Pro-359, Pro-368, Pro-371, Pro-380, Pro-389, Pro-395, Pro-407, Pro-416, Pro-425, Pro-428, Pro-446, Pro-463, Pro-469, Pro-475, Pro-481, Pro-487, Pro-493, Pro-505, Pro-514, Pro-523, Pro-535, Pro-538, Pro-544, Pro-550, and Pro-559. Residues 362–388 (KGLTGSPGSPGPDGKTGPPGPAGQDGR) are compositionally biased toward low complexity. Residues 397–416 (ARGQAGVMGFPGPKGAAGEP) show a composition bias toward low complexity. The span at 475 to 484 (PGEAGKPGEQ) shows a compositional bias: low complexity. The segment covering 519-547 (PRGAPGNDGAKGDAGAPGAPGSQGAPGLQ) has biased composition (low complexity). 5-hydroxylysine is present on Lys-571. 3 positions are modified to 4-hydroxyproline: Pro-577, Pro-592, and Pro-598. A compositionally biased stretch (low complexity) spans 604–618 (SGPSGPAGPTGARGA). Residue Ser-607 is modified to Phosphoserine. Residues Pro-619, Pro-625, Pro-628, Pro-637, Pro-643, Pro-661, Pro-670, and Pro-679 each carry the 4-hydroxyproline modification. Over residues 631–658 (AGFAGPPGADGQPGAKGEPGDAGAKGDA) the composition is skewed to low complexity. Residues 660–672 (PPGPAGPTGPPGP) are compositionally biased toward pro residues. Lys-682 is modified (5-hydroxylysine). Low complexity predominate over residues 687 to 703 (SAGPPGATGFPGAAGRV). A 4-hydroxyproline mark is found at Pro-691 and Pro-697. The residue at position 705 (Pro-705) is a 3-hydroxyproline. A 4-hydroxyproline mark is found at Pro-706, Pro-717, Pro-738, Pro-747, Pro-755, Pro-764, Pro-781, Pro-790, Pro-793, Pro-799, Pro-814, Pro-820, Pro-826, Pro-835, and Pro-841. Residues 731 to 740 (ETGPAGRPGE) show a composition bias toward low complexity. A compositionally biased stretch (low complexity) spans 752–764 (KGSPGADGPAGAP). The span at 813-823 (PPGPVGPPGLA) shows a compositional bias: pro residues. The segment covering 825-840 (PPGESGREGSPGAEGS) has biased composition (low complexity). Lys-850 is modified (5-hydroxylysine). Pro residues predominate over residues 858-873 (PGPPGAPGAPGAPGPV). 4-hydroxyproline is present on residues Pro-861, Pro-864, and Pro-867. A compositionally biased stretch (low complexity) spans 894-908 (AGPAGARGPAGPQGP). The span at 909-923 (RGDKGETGEQGDRGI) shows a compositional bias: basic and acidic residues. Lys-912 is modified (5-hydroxylysine). A 5-hydroxylysine; alternate modification is found at Lys-924. Lys-924 is a glycosylation site (O-linked (Gal...) hydroxylysine; alternate). Residues Pro-939, Pro-942, Pro-960, and Pro-975 each carry the 4-hydroxyproline modification. Residues 942–975 (PGEQGPSGASGPAGPRGPPGSAGSPGKDGLNGLP) are compositionally biased toward low complexity. Pro-980 is subject to 3-hydroxyproline. A 4-hydroxyproline modification is found at Pro-981. Positions 993 to 1008 (VGPPGPPGPPGPPGPP) are enriched in pro residues. Position 995 is a 3-hydroxyproline (Pro-995). Pro-996 carries the post-translational modification 4-hydroxyproline. At Pro-998 the chain carries 3-hydroxyproline. Pro-999 is modified (4-hydroxyproline). Pro-1001 carries the 3-hydroxyproline modification. 4-hydroxyproline is present on residues Pro-1002, Pro-1005, and Pro-1008.

It belongs to the fibrillar collagen family. Trimers of one alpha 2(I) and two alpha 1(I) chains. Contains mostly 4-hydroxyproline. Proline residues at the third position of the tripeptide repeating unit (G-X-Y) are hydroxylated in some or all of the chains. In terms of processing, contains 3-hydroxyproline at a few sites. This modification occurs on the first proline residue in the sequence motif Gly-Pro-Hyp, where Hyp is 4-hydroxyproline. Post-translationally, lysine residues at the third position of the tripeptide repeating unit (G-X-Y) are 5-hydroxylated in some or all of the chains. O-glycosylated on hydroxylated lysine residues. The O-linked glycan consists of a Glc-Gal disaccharide. Expressed in bones.

It is found in the secreted. The protein resides in the extracellular space. It localises to the extracellular matrix. In terms of biological role, type I collagen is a member of group I collagen (fibrillar forming collagen). The protein is Collagen alpha-1(I) chain of Paramylodon harlani (Harlan's ground sloth).